A 547-amino-acid chain; its full sequence is CAP-Gly domain-containing linker protein 3 (547 aa).

The disordered stretch occupies residues 1–49 (MTKTDPAPMAPPPRGEEEEEEEEDEPVPEAPSPTQERRQKPVVHPSAPA). A compositionally biased stretch (acidic residues) spans 16 to 27 (EEEEEEEEDEPV). ANK repeat units follow at residues 117–158 (TDMT…LRSR), 160–191 (TNMNALHYAAYFDVPDLVRVLLKGARPRVVNS), and 197–229 (NHGSALHIAASNLCLGAAKCLLEHGANPALRNR). Residues 314 to 356 (GTTEFASGQWVGVELDEPEGKNDGSVGGVRYFICPPKQGLFAS) form the CAP-Gly 1 domain. Positions 365–413 (DAPPSSVTSTPRTPRMDFSRVTGKGRREHKGKKKSPSSPSLGSLQQREG) are disordered. A compositionally biased stretch (low complexity) spans 367–377 (PPSSVTSTPRT). T374 carries the post-translational modification Phosphothreonine. A compositionally biased stretch (basic residues) spans 387–399 (GKGRREHKGKKKS). A phosphoserine mark is found at S399 and S401. One can recognise a CAP-Gly 2 domain in the interval 436–478 (GKTDFAPGYWYGIELDQPTGKHDGSVFGVRYFTCAPRHGVFAP). The tract at residues 488–547 (STDPPGDSVGAKKVHQVTMTQPKRTFTTVRTPKDIASENSISRLLFCCWFPWMLRAEMQS) is goLD. 2 S-palmitoyl cysteine lipidation sites follow: C534 and C535.

In terms of assembly, homodimer. Interacts with AKT1 and AKT2; when AKT1 and AKT2 are phosphorylated and activated, affinity is higher for AKT2. Interacts with ZDHHC13 (via ANK repeats). Interacts with ZDHHC17 (via ANK repeats). Post-translationally, palmitoylation by ZDHHC17 regulates association with the plasma membrane.

It is found in the cell membrane. The protein localises to the cytoplasm. Its subcellular location is the golgi apparatus. It localises to the golgi stack. Functionally, functions as a cytoplasmic linker protein. Involved in TGN-endosome dynamics. May modulate the cellular compartmentalization of AKT kinase family and promote its cell membrane localization, thereby playing a role in glucose transport in adipocytes. The chain is CAP-Gly domain-containing linker protein 3 (Clip3) from Mus musculus (Mouse).